We begin with the raw amino-acid sequence, 245 residues long: Uridylate kinase (245 aa).

20–23 is a binding site for ATP; sequence KLSG. G60 contributes to the UMP binding site. Residues G61 and R65 each coordinate ATP. Residues D80 and 141 to 148 each bind UMP; that span reads AGLPYFST. The ATP site is built by Y175 and D178.

It belongs to the UMP kinase family. Homohexamer.

The protein localises to the cytoplasm. The enzyme catalyses UMP + ATP = UDP + ADP. It functions in the pathway pyrimidine metabolism; CTP biosynthesis via de novo pathway; UDP from UMP (UMPK route): step 1/1. Its activity is regulated as follows. Inhibited by UTP. Catalyzes the reversible phosphorylation of UMP to UDP. In Paenarthrobacter aurescens (strain TC1), this protein is Uridylate kinase.